We begin with the raw amino-acid sequence, 412 residues long: Putative competence-damage inducible protein (412 aa).

Belongs to the CinA family.

The sequence is that of Putative competence-damage inducible protein from Bacillus cereus (strain ATCC 10987 / NRS 248).